Consider the following 295-residue polypeptide: UDP-N-acetylenolpyruvoylglucosamine reductase (295 aa).

The FAD-binding PCMH-type domain maps to 23–188 (KVGGPADFLA…ISAKFALKPG (166 aa)). Residue Arg-167 is part of the active site. Ser-217 (proton donor) is an active-site residue. Residue Glu-287 is part of the active site.

It belongs to the MurB family. FAD serves as cofactor.

The protein resides in the cytoplasm. It catalyses the reaction UDP-N-acetyl-alpha-D-muramate + NADP(+) = UDP-N-acetyl-3-O-(1-carboxyvinyl)-alpha-D-glucosamine + NADPH + H(+). Its pathway is cell wall biogenesis; peptidoglycan biosynthesis. Functionally, cell wall formation. In Streptococcus pyogenes serotype M28 (strain MGAS6180), this protein is UDP-N-acetylenolpyruvoylglucosamine reductase.